The following is a 195-amino-acid chain: Nucleoside-triphosphatase THEP1 (195 aa).

Residues 11–18 and 103–110 contribute to the ATP site; these read GRPGSGKS and VVVIDEIG.

This sequence belongs to the THEP1 NTPase family.

The enzyme catalyses a ribonucleoside 5'-triphosphate + H2O = a ribonucleoside 5'-diphosphate + phosphate + H(+). Functionally, has nucleotide phosphatase activity towards ATP, GTP, CTP, TTP and UTP. May hydrolyze nucleoside diphosphates with lower efficiency. In Korarchaeum cryptofilum (strain OPF8), this protein is Nucleoside-triphosphatase THEP1.